Here is an 867-residue protein sequence, read N- to C-terminus: Alanine--tRNA ligase (867 aa).

Residues His556, His560, Cys658, and His662 each contribute to the Zn(2+) site.

This sequence belongs to the class-II aminoacyl-tRNA synthetase family. Zn(2+) is required as a cofactor.

It localises to the cytoplasm. It carries out the reaction tRNA(Ala) + L-alanine + ATP = L-alanyl-tRNA(Ala) + AMP + diphosphate. Its function is as follows. Catalyzes the attachment of alanine to tRNA(Ala) in a two-step reaction: alanine is first activated by ATP to form Ala-AMP and then transferred to the acceptor end of tRNA(Ala). Also edits incorrectly charged Ser-tRNA(Ala) and Gly-tRNA(Ala) via its editing domain. This is Alanine--tRNA ligase from Fusobacterium nucleatum subsp. nucleatum (strain ATCC 25586 / DSM 15643 / BCRC 10681 / CIP 101130 / JCM 8532 / KCTC 2640 / LMG 13131 / VPI 4355).